The primary structure comprises 691 residues: Methionine--tRNA ligase (691 aa).

The 'HIGH' region motif lies at 14–24 (PYANGPFHLGH). The Zn(2+) site is built by cysteine 148, cysteine 151, cysteine 161, and cysteine 164. The 'KMSKS' region signature appears at 344-348 (KMSKS). Residue lysine 347 coordinates ATP. A tRNA-binding domain is found at 585-691 (DFDRVDLRVA…PGAKPGMRVR (107 aa)).

This sequence belongs to the class-I aminoacyl-tRNA synthetase family. MetG type 1 subfamily. Homodimer. Zn(2+) serves as cofactor.

It localises to the cytoplasm. The catalysed reaction is tRNA(Met) + L-methionine + ATP = L-methionyl-tRNA(Met) + AMP + diphosphate. Is required not only for elongation of protein synthesis but also for the initiation of all mRNA translation through initiator tRNA(fMet) aminoacylation. In Verminephrobacter eiseniae (strain EF01-2), this protein is Methionine--tRNA ligase.